A 520-amino-acid chain; its full sequence is BTB/POZ domain-containing protein At3g50780 (520 aa).

The interval S43–S68 is disordered. The BTB domain maps to A127 to L196.

It participates in protein modification; protein ubiquitination. Its function is as follows. May act as a substrate-specific adapter of an E3 ubiquitin-protein ligase complex (CUL3-RBX1-BTB) which mediates the ubiquitination and subsequent proteasomal degradation of target proteins. In Arabidopsis thaliana (Mouse-ear cress), this protein is BTB/POZ domain-containing protein At3g50780.